The chain runs to 614 residues: Dihydroxy-acid dehydratase (614 aa).

Asp-81 contacts Mg(2+). Cys-122 provides a ligand contact to [2Fe-2S] cluster. The Mg(2+) site is built by Asp-123 and Lys-124. Lys-124 carries the N6-carboxylysine modification. [2Fe-2S] cluster is bound at residue Cys-193. A Mg(2+)-binding site is contributed by Glu-489. Catalysis depends on Ser-515, which acts as the Proton acceptor.

The protein belongs to the IlvD/Edd family. In terms of assembly, homodimer. [2Fe-2S] cluster is required as a cofactor. The cofactor is Mg(2+).

It carries out the reaction (2R)-2,3-dihydroxy-3-methylbutanoate = 3-methyl-2-oxobutanoate + H2O. The enzyme catalyses (2R,3R)-2,3-dihydroxy-3-methylpentanoate = (S)-3-methyl-2-oxopentanoate + H2O. It participates in amino-acid biosynthesis; L-isoleucine biosynthesis; L-isoleucine from 2-oxobutanoate: step 3/4. It functions in the pathway amino-acid biosynthesis; L-valine biosynthesis; L-valine from pyruvate: step 3/4. Its function is as follows. Functions in the biosynthesis of branched-chain amino acids. Catalyzes the dehydration of (2R,3R)-2,3-dihydroxy-3-methylpentanoate (2,3-dihydroxy-3-methylvalerate) into 2-oxo-3-methylpentanoate (2-oxo-3-methylvalerate) and of (2R)-2,3-dihydroxy-3-methylbutanoate (2,3-dihydroxyisovalerate) into 2-oxo-3-methylbutanoate (2-oxoisovalerate), the penultimate precursor to L-isoleucine and L-valine, respectively. In Hahella chejuensis (strain KCTC 2396), this protein is Dihydroxy-acid dehydratase.